The sequence spans 397 residues: Dual specificity mitogen-activated protein kinase kinase 4 (397 aa).

A disordered region spans residues 1 to 38; that stretch reads MAAPSPSGGGGSGGGGGTPGPIGPPASGHPAVSSMQGK. A2 carries the post-translational modification N-acetylalanine. Positions 7–20 are enriched in gly residues; the sequence is SGGGGSGGGGGTPG. The interval 35 to 50 is d domain; the sequence is MQGKRKALKLNFANPP. An Asymmetric dimethylarginine; alternate modification is found at R56. Residue R56 is modified to Omega-N-methylarginine; alternate. A Phosphoserine modification is found at S88. The 267-residue stretch at 100–366 folds into the Protein kinase domain; sequence LKDLGEIGRG…KELLKHPFIL (267 aa). ATP is bound by residues 106-114 and K129; that span reads IGRGAYGSV. D227 (proton acceptor) is an active-site residue. S255 bears the Phosphoserine mark. T259 bears the Phosphothreonine mark. The segment at 362-385 is DVD domain; it reads HPFILMYEERTVEVACYVCKILDQ.

The protein belongs to the protein kinase superfamily. STE Ser/Thr protein kinase family. MAP kinase kinase subfamily. Interacts with SPAG9. Interacts (via its D domain) with its substrates MAPK8/JNK1, MAPK9/JNK2, MAPK10/JNK3, MAPK11 and MAPK14. Interacts (via its DVD domain) with MAP3Ks activators like MAP3K1/MEKK1 and MAP3K11/MLK3. Interacts with ARRB1, ARRB2 and MAPK8IP3/JIP3. Post-translationally, activated by phosphorylation on Ser-255 and Thr-259 by MAP kinase kinase kinases (MAP3Ks). Strong expression is detected in most of the central nervous system and in liver and thymus during early stages of development. While expression in nervous system increases over time, expression in fetal liver and thymus gradually decreases as embryogenesis proceeds. High level of expression in the central nervous system persists throughout postnatal development and remained at a stable level in adult brain.

The protein localises to the cytoplasm. Its subcellular location is the nucleus. It catalyses the reaction L-seryl-[protein] + ATP = O-phospho-L-seryl-[protein] + ADP + H(+). The catalysed reaction is L-threonyl-[protein] + ATP = O-phospho-L-threonyl-[protein] + ADP + H(+). It carries out the reaction L-tyrosyl-[protein] + ATP = O-phospho-L-tyrosyl-[protein] + ADP + H(+). Its activity is regulated as follows. Activated in response to a variety of cellular stresses, including UV and gamma-irradiation, heat shock, hyperosmolarity, T-cell receptor stimulation, peroxide and inflammatory cytokines. Also activated by developmental cues. MAP2K4/MKK4 is activated by the majority of MKKKs, such as MAP3K5/ASK1, MAP3K1/MEKK1, MAP3K7/TAK1, MAP3K10/MLK2, MAP3K11/MLK3, MAP3K12/DLK and MAP3K13/LZK. Dual specificity protein kinase which acts as an essential component of the MAP kinase signal transduction pathway. Essential component of the stress-activated protein kinase/c-Jun N-terminal kinase (SAP/JNK) signaling pathway. With MAP2K7/MKK7, is the one of the only known kinase to directly activate the stress-activated protein kinase/c-Jun N-terminal kinases MAPK8/JNK1, MAPK9/JNK2 and MAPK10/JNK3. MAP2K4/MKK4 and MAP2K7/MKK7 both activate the JNKs by phosphorylation, but they differ in their preference for the phosphorylation site in the Thr-Pro-Tyr motif. MAP2K4 shows preference for phosphorylation of the Tyr residue and MAP2K7/MKK7 for the Thr residue. The phosphorylation of the Thr residue by MAP2K7/MKK7 seems to be the prerequisite for JNK activation at least in response to pro-inflammatory cytokines, while other stimuli activate both MAP2K4/MKK4 and MAP2K7/MKK7 which synergistically phosphorylate JNKs. MAP2K4 is required for maintaining peripheral lymphoid homeostasis. The MKK/JNK signaling pathway is also involved in mitochondrial death signaling pathway, including the release cytochrome c, leading to apoptosis. Whereas MAP2K7/MKK7 exclusively activates JNKs, MAP2K4/MKK4 additionally activates the p38 MAPKs MAPK11, MAPK12, MAPK13 and MAPK14. The polypeptide is Dual specificity mitogen-activated protein kinase kinase 4 (Map2k4) (Mus musculus (Mouse)).